A 345-amino-acid chain; its full sequence is UPF0324 membrane protein CTC_01844 (345 aa).

10 helical membrane passes run 7-24 (YSVGILFTAVLAVISGFI), 28-50 (IPYRLIGAGVFALLIGMFLNPIV), 70-87 (LAIILMGITLSFSQVLEV), 91-113 (SLIVMVFTLITAFGGGYLLGKLF), 120-142 (SGLISAGTGICGGSAIAAISPVI), 152-174 (AISATFIFDVIMVILFPIAGKYF), 181-203 (YGLWAGTAVNDTSSVVAAGYAFS), 209-231 (FSVIVKLTRTLSIVPVVLIFSYI), 261-283 (IFPWFILLFLVMVAIKSTGIIPN), and 316-338 (SGFAPAVHGFIISLLVVVVSFLV).

It belongs to the UPF0324 family.

Its subcellular location is the cell membrane. In Clostridium tetani (strain Massachusetts / E88), this protein is UPF0324 membrane protein CTC_01844.